The primary structure comprises 61 residues: Temporin-SN3 (61 aa).

The N-terminal stretch at 1–22 is a signal peptide; the sequence is MFTLKKTLLLLFFLGTINLSLC. Residues 23–44 constitute a propeptide, removed in mature form; it reads EEERNAEEERRDGDDEMDVEVK. Lysine amide is present on K61.

This sequence belongs to the frog skin active peptide (FSAP) family. Temporin subfamily. Expressed by the skin glands.

It is found in the secreted. Antimicrobial peptide. Active against some Gram-positive and Gram-negative bacterial strains. Active against fungus C.glabrata 090902 but not against C.albicans ATCC 12231. Shows weak hemolytic activity against human erythrocytes. The polypeptide is Temporin-SN3 (Sylvirana spinulosa (Fine-spined frog)).